The following is a 23-amino-acid chain: Prolamin alpha-3 (23 aa).

The chain is Prolamin alpha-3 from Dactylis glomerata (Orchard grass).